We begin with the raw amino-acid sequence, 495 residues long: Protein YhjJ (495 aa).

The signal sequence occupies residues 1–24 (MQGTKIRLLAGSLLMLASAGYVQA).

The protein belongs to the peptidase M16 family.

It localises to the periplasm. This Salmonella typhi protein is Protein YhjJ (yhjJ).